Consider the following 421-residue polypeptide: Calreticulin (421 aa).

The signal sequence occupies residues 1 to 22 (MAFRVPNSSLLSLILLSLLAIA). A glycan (N-linked (GlcNAc...) asparagine) is linked at Asn-56. A disulfide bridge links Cys-110 with Cys-142. 4 residues coordinate an alpha-D-glucoside: Tyr-114, Lys-116, Tyr-133, and Asp-140. A glycan (N-linked (GlcNAc...) asparagine) is linked at Asn-156. 7 repeat units span residues 196 to 207 (KQTGSLYSDWDL), 215 to 226 (DPEAKKPEDWED), 232 to 243 (DPEDKKPEGYDD), 250 to 261 (DPDAKKPEDWDD), 265 to 275 (GEWTAPTIPNP), 279 to 289 (GEWKPKKIKNP), and 293 to 303 (GKWKAPLIDNP). Positions 196 to 261 (KQTGSLYSDW…DAKKPEDWDD (66 aa)) are 4 X approximate repeats. Positions 217 to 283 (EAKKPEDWED…NPEYKGEWKP (67 aa)) are disordered. A compositionally biased stretch (acidic residues) spans 223-232 (DWEDQEYIPD). Over residues 233 to 257 (PEDKKPEGYDDIPKEITDPDAKKPE) the composition is skewed to basic and acidic residues. Positions 265–303 (GEWTAPTIPNPEYKGEWKPKKIKNPNFKGKWKAPLIDNP) are 3 X approximate repeats. Glu-323 contributes to the an alpha-D-glucoside binding site. A compositionally biased stretch (basic and acidic residues) spans 350–380 (EETWGKQKDAEKAAFEELEKKLQEEESKEDP). The disordered stretch occupies residues 350 to 421 (EETWGKQKDA…ETEAEKHDEL (72 aa)). Over residues 381 to 399 (VDSDAEDDDNEAEDGEESD) the composition is skewed to acidic residues. Residues 418–421 (HDEL) carry the Prevents secretion from ER motif.

It belongs to the calreticulin family.

It localises to the endoplasmic reticulum lumen. Functionally, molecular calcium-binding chaperone promoting folding, oligomeric assembly and quality control in the ER via the calreticulin/calnexin cycle. This lectin may interact transiently with almost all of the monoglucosylated glycoproteins that are synthesized in the ER. The protein is Calreticulin of Prunus armeniaca (Apricot).